The primary structure comprises 350 residues: Nicotinate-nucleotide--dimethylbenzimidazole phosphoribosyltransferase (350 aa).

Glu316 (proton acceptor) is an active-site residue.

The protein belongs to the CobT family.

It carries out the reaction 5,6-dimethylbenzimidazole + nicotinate beta-D-ribonucleotide = alpha-ribazole 5'-phosphate + nicotinate + H(+). It participates in nucleoside biosynthesis; alpha-ribazole biosynthesis; alpha-ribazole from 5,6-dimethylbenzimidazole: step 1/2. Its function is as follows. Catalyzes the synthesis of alpha-ribazole-5'-phosphate from nicotinate mononucleotide (NAMN) and 5,6-dimethylbenzimidazole (DMB). The protein is Nicotinate-nucleotide--dimethylbenzimidazole phosphoribosyltransferase of Pseudomonas syringae pv. syringae (strain B728a).